The following is a 412-amino-acid chain: Putative competence-damage inducible protein (412 aa).

This sequence belongs to the CinA family.

This is Putative competence-damage inducible protein from Bacillus anthracis.